The chain runs to 225 residues: Cytidylate kinase (225 aa).

10 to 18 provides a ligand contact to ATP; that stretch reads GPASSGKST.

The protein belongs to the cytidylate kinase family. Type 1 subfamily.

It localises to the cytoplasm. It catalyses the reaction CMP + ATP = CDP + ADP. The catalysed reaction is dCMP + ATP = dCDP + ADP. This is Cytidylate kinase from Streptococcus gordonii (strain Challis / ATCC 35105 / BCRC 15272 / CH1 / DL1 / V288).